The primary structure comprises 214 residues: Germin-like protein (214 aa).

The signal sequence occupies residues 1 to 22 (MVMMRIFFFLFLLAFPVFTANA). Cys-28 and Cys-44 are oxidised to a cystine. The 147-residue stretch at 58 to 204 (SGLAKPGNTT…TTCLDEATIK (147 aa)) folds into the Cupin type-1 domain. Residues His-106, His-108, and Glu-113 each coordinate Mn(2+).

Belongs to the germin family. As to quaternary structure, oligomer (believed to be a pentamer but probably hexamer). As to expression, cotyledons and leaves.

The protein resides in the secreted. Its subcellular location is the extracellular space. It localises to the apoplast. The protein is Germin-like protein (GLP) of Ipomoea nil (Japanese morning glory).